The following is a 188-amino-acid chain: PRA1 family protein 3 (188 aa).

Methionine 1 carries the post-translational modification N-acetylmethionine. The Cytoplasmic portion of the chain corresponds to 1–35 (MDVNIAPLRAWDDFFPGSDRFARPDFRDISKWNNR). 2 helical membrane-spanning segments follow: residues 36-56 (VVSNLLYYQTNYLVVAAMMIS) and 57-77 (VVGFLSPFNMILGGIVVVLVF). At 78–93 (TGFVWAAHNKDILRRL) the chain is on the cytoplasmic side. The next 2 helical transmembrane spans lie at 94 to 114 (KKQYPTVFVMVVMLASYFLIS) and 115 to 135 (MFGGVMVFVFGITFPLLLMFI). Positions 103–117 (MVVMLASYFLISMFG) are required for homodimer formation and heterodimer formation with ARL6IP1. The Cytoplasmic portion of the chain corresponds to 136 to 188 (HASLRLRNLKNKLENKIEGIGLKRTPMGIVLDALEQQEENISKFADYISKVNE). The segment at 136–188 (HASLRLRNLKNKLENKIEGIGLKRTPMGIVLDALEQQEENISKFADYISKVNE) is targeting to endoplasmic reticulum membrane.

Belongs to the PRA1 family. Homodimer. Heterodimer with ARL6IP1. Forms multimers. Interacts with ARL6. Interacts with prenylated RAB1A and RAB3A. Interacts with SLC1A1/EAAC1. Interacts with RTN2 (via first transmembrane domain). Does not interact with VAMP1, VAMP2 or VAMP3.

It is found in the endoplasmic reticulum membrane. The protein localises to the cell membrane. Its subcellular location is the cytoplasm. The protein resides in the cytoskeleton. Its function is as follows. Regulates intracellular concentrations of taurine and glutamate. Negatively modulates SLC1A1/EAAC1 glutamate transport activity by decreasing its affinity for glutamate in a PKC activity-dependent manner. Plays a role in the retention of SLC1A1/EAAC1 in the endoplasmic reticulum. This is PRA1 family protein 3 (ARL6IP5) from Sus scrofa (Pig).